Consider the following 454-residue polypeptide: Ig mu chain C region (454 aa).

The CH1 stretch occupies residues 1–105 (SPSSPTVFPL…NKDLRVPIPV (105 aa)). The cysteines at positions 27 and 88 are disulfide-linked. 7 N-linked (GlcNAc...) asparagine glycosylation sites follow: Asn-45, Asn-112, Asn-192, Asn-210, Asn-238, Asn-257, and Asn-280. Positions 106–218 (VTEMNPNVSV…KNVSSTCAAS (113 aa)) are CH2. Cys-135 and Cys-198 are disulfide-bonded. Positions 219–324 (PSTDIQAFPI…QKKFISKPRE (106 aa)) are CH3. Disulfide bonds link Cys-245/Cys-304 and Cys-352/Cys-414. Residues 325–454 (MNKTPPAVYQ…IMSDAGGTCY (130 aa)) form a CH4 region. A glycan (N-linked (GlcNAc...) asparagine) is linked at Asn-441.

The sequence is that of Ig mu chain C region from Mesocricetus auratus (Golden hamster).